The following is a 416-amino-acid chain: 3-hydroxy-3-methylglutaryl coenzyme A reductase AN1593 (416 aa).

The active-site Charge relay system is the glutamate 103. N-linked (GlcNAc...) asparagine glycosylation occurs at asparagine 167. Residue lysine 236 is the Charge relay system of the active site. An N-linked (GlcNAc...) asparagine glycan is attached at asparagine 277. The Charge relay system role is filled by aspartate 312. Residues 380-400 traverse the membrane as a helical segment; it reads LALLVAAGVLAGELSLCSALS. Residue histidine 408 is the Proton donor of the active site.

This sequence belongs to the HMG-CoA reductase family.

The protein resides in the membrane. It carries out the reaction (R)-mevalonate + 2 NADP(+) + CoA = (3S)-3-hydroxy-3-methylglutaryl-CoA + 2 NADPH + 2 H(+). It functions in the pathway metabolic intermediate biosynthesis; (R)-mevalonate biosynthesis; (R)-mevalonate from acetyl-CoA: step 3/3. 3-hydroxy-3-methylglutaryl coenzyme A reductase; part of the gene cluster that mediates the biosynthesis of the diterpene ent-pimara-8(14),15-diene (PD). Within the cluster, the HMG-CoA reductase AN1593 functions in the mevalonate pathway, which produces isoprenoid precursors. The geranylgeranyl pyrophosphate (GGPP) synthase AN1592 is needed in the formation of GGPP, the precursor for diterpenes. Lastly, the pimaradiene synthase pbcA performs the 2 cyclization steps that convert GGPP to ent-pimara-8(14),15-diene. The putative roles of the remaining cluster enzymes in ent-pimara-8(14),15-diene biosynthesis is unclear. The cytochrome P450 monooxygenase AN1598, the glutathione S-transferase AN1595, the oxidoreductases AN1596 and AN1597 probably function as decorative enzymes. It is possible that in biological conditions the compound is oxidized to ent-pimara-8(14),15-dien-19-oic acid, which is a bioactive diterpene compound predominant in many plant extracts. The protein is 3-hydroxy-3-methylglutaryl coenzyme A reductase AN1593 of Emericella nidulans (strain FGSC A4 / ATCC 38163 / CBS 112.46 / NRRL 194 / M139) (Aspergillus nidulans).